A 189-amino-acid polypeptide reads, in one-letter code: GTPase NRas (189 aa).

10 to 17 (GAGGVGKS) is a binding site for GTP. An Effector region motif is present at residues 32–40 (YDPTIEDSY). GTP is bound by residues 57–61 (DTAGQ) and 116–119 (NKCD). The hypervariable region stretch occupies residues 166 to 185 (YRMKKLDSSEDNNQGCIRIP). The S-palmitoyl cysteine moiety is linked to residue Cys-181. Residue Cys-186 is the site of S-farnesyl cysteine attachment. Positions 187 to 189 (KLM) are cleaved as a propeptide — removed in mature form.

It belongs to the small GTPase superfamily. Ras family. In terms of processing, palmitoylated by the ZDHHC9-GOLGA7 complex. Depalmitoylated by abhd17a, abhd17b and abhd17c. A continuous cycle of de- and re-palmitoylation regulates rapid exchange between plasma membrane and Golgi.

Its subcellular location is the cell membrane. It is found in the golgi apparatus membrane. It carries out the reaction GTP + H2O = GDP + phosphate + H(+). Alternates between an inactive form bound to GDP and an active form bound to GTP. Activated by a guanine nucleotide-exchange factor (GEF) and inactivated by a GTPase-activating protein (GAP). Ras proteins bind GDP/GTP and possess intrinsic GTPase activity. In Xenopus laevis (African clawed frog), this protein is GTPase NRas (nras).